A 102-amino-acid chain; its full sequence is Salivary protein Salp9 (102 aa).

An N-terminal signal peptide occupies residues 1–21 (MGLTEIMLVLVSLAFVATAAA). N-linked (GlcNAc...) asparagine glycosylation is found at Asn-26 and Asn-87. The tract at residues 83 to 102 (SGVPNDTDAKIEETEEELEA) is disordered.

Belongs to the salp14 family. Salivary gland (at protein level). Saliva (at protein level). Midgut.

Its subcellular location is the secreted. Salivary protein that facilitates blood feeding of adult ticks on vertebrate species. Inhibits the lectin pathway of complement system activation in the host. In Ixodes scapularis (Black-legged tick), this protein is Salivary protein Salp9.